A 90-amino-acid polypeptide reads, in one-letter code: Small ribosomal subunit protein uS15c (90 aa).

Belongs to the universal ribosomal protein uS15 family. In terms of assembly, part of the 30S ribosomal subunit.

Its subcellular location is the plastid. It localises to the chloroplast. In Liriodendron tulipifera (Tuliptree), this protein is Small ribosomal subunit protein uS15c (rps15).